The sequence spans 293 residues: tRNA pseudouridine synthase B (293 aa).

The active-site Nucleophile is the aspartate 40.

The protein belongs to the pseudouridine synthase TruB family. Type 1 subfamily.

The catalysed reaction is uridine(55) in tRNA = pseudouridine(55) in tRNA. Functionally, responsible for synthesis of pseudouridine from uracil-55 in the psi GC loop of transfer RNAs. The protein is tRNA pseudouridine synthase B of Mycolicibacterium paratuberculosis (strain ATCC BAA-968 / K-10) (Mycobacterium paratuberculosis).